A 293-amino-acid polypeptide reads, in one-letter code: Ribosomal protein L11 methyltransferase (293 aa).

Residues T145, G166, D188, and N230 each contribute to the S-adenosyl-L-methionine site.

This sequence belongs to the methyltransferase superfamily. PrmA family.

It localises to the cytoplasm. The catalysed reaction is L-lysyl-[protein] + 3 S-adenosyl-L-methionine = N(6),N(6),N(6)-trimethyl-L-lysyl-[protein] + 3 S-adenosyl-L-homocysteine + 3 H(+). Functionally, methylates ribosomal protein L11. The sequence is that of Ribosomal protein L11 methyltransferase from Actinobacillus pleuropneumoniae serotype 7 (strain AP76).